An 81-amino-acid polypeptide reads, in one-letter code: Sulfur carrier protein TusA (81 aa).

The Cysteine persulfide intermediate role is filled by C19.

It belongs to the sulfur carrier protein TusA family.

It is found in the cytoplasm. In terms of biological role, sulfur carrier protein which probably makes part of a sulfur-relay system. The protein is Sulfur carrier protein TusA of Shewanella sediminis (strain HAW-EB3).